A 543-amino-acid chain; its full sequence is Protein B602L (543 aa).

Repeat copies occupy residues 161-164, 165-168, 169-172, 173-176, 177-180, 181-184, 185-188, 189-192, 193-196, 197-200, 201-204, 205-208, and 209-212. The interval 161–212 is 13 X 4 AA tandem repeats of [CN]-[ATV]-[DS]-T; it reads CASTCASTCASTCASTCADTNVDTCTDTCASTCADTNVDTCASTCADTCAST.

It belongs to the asfivirus B602L family.

The protein localises to the host cytoplasm. Its function is as follows. Plays an essential role in the assembly of the icosahedral capsid of the virus. Allows the assembly of 3 molecules of hexon protein p72 and formation of a thermostable trimer. In African swine fever virus (isolate Pig/Kenya/KEN-50/1950) (ASFV), this protein is Protein B602L.